Reading from the N-terminus, the 400-residue chain is Probable S-adenosylmethionine synthase (400 aa).

135-140 is an ATP binding site; sequence KPGSKD.

Belongs to the AdoMet synthase 2 family. Requires Mg(2+) as cofactor.

The enzyme catalyses L-methionine + ATP + H2O = S-adenosyl-L-methionine + phosphate + diphosphate. Its pathway is amino-acid biosynthesis; S-adenosyl-L-methionine biosynthesis; S-adenosyl-L-methionine from L-methionine: step 1/1. Functionally, catalyzes the formation of S-adenosylmethionine from methionine and ATP. The chain is Probable S-adenosylmethionine synthase (mat) from Aquifex aeolicus (strain VF5).